The following is a 451-amino-acid chain: Porin AaxA (451 aa).

Residues 1–27 (MASFHSSLLTALCTLCTYGILTMPAYG) form the signal peptide.

The protein belongs to the OprB family.

It localises to the cell outer membrane. Functionally, facilitates L-arginine uptake, as part of the AaxABC system. The arginine uptake by the bacterium in the macrophage may be a virulence factor against the host innate immune response. The chain is Porin AaxA (aaxA) from Chlamydia caviae (strain ATCC VR-813 / DSM 19441 / 03DC25 / GPIC) (Chlamydophila caviae).